The chain runs to 121 residues: Fluoride-specific ion channel FluC 2 (121 aa).

4 consecutive transmembrane segments (helical) span residues 3–23 (YLFV…LSTL), 27–47 (SGLP…MGYL), 64–84 (GVTT…FELV), and 92–112 (IALL…FCWF). Na(+) contacts are provided by glycine 71 and threonine 74.

Belongs to the fluoride channel Fluc/FEX (TC 1.A.43) family.

It localises to the cell membrane. It carries out the reaction fluoride(in) = fluoride(out). With respect to regulation, na(+) is not transported, but it plays an essential structural role and its presence is essential for fluoride channel function. In terms of biological role, fluoride-specific ion channel. Important for reducing fluoride concentration in the cell, thus reducing its toxicity. This chain is Fluoride-specific ion channel FluC 2, found in Staphylococcus haemolyticus (strain JCSC1435).